The following is a 275-amino-acid chain: Rhamnulose-1-phosphate aldolase (275 aa).

Glu-117 is a catalytic residue. Residues His-141, His-143, and His-212 each coordinate Zn(2+).

Belongs to the aldolase class II family. RhaD subfamily. As to quaternary structure, homotetramer. Requires Zn(2+) as cofactor.

It localises to the cytoplasm. The catalysed reaction is L-rhamnulose 1-phosphate = (S)-lactaldehyde + dihydroxyacetone phosphate. It functions in the pathway carbohydrate degradation; L-rhamnose degradation; glycerone phosphate from L-rhamnose: step 3/3. Catalyzes the reversible cleavage of L-rhamnulose-1-phosphate to dihydroxyacetone phosphate (DHAP) and L-lactaldehyde. This chain is Rhamnulose-1-phosphate aldolase, found in Salmonella heidelberg (strain SL476).